Here is an 852-residue protein sequence, read N- to C-terminus: Lon protease homolog 2, peroxisomal (852 aa).

S2 carries the N-acetylserine modification. The 210-residue stretch at 13–222 (LPLLLTHEGV…MTIPLLVRQI (210 aa)) folds into the Lon N-terminal domain. ATP is bound at residue 375–382 (GPPGVGKT). The 187-residue stretch at 651–837 (LSQPGVAIGL…DEVLNAAFDG (187 aa)) folds into the Lon proteolytic domain. Active-site residues include S743 and K786. A Microbody targeting signal motif is present at residues 850–852 (SKL).

This sequence belongs to the peptidase S16 family. Interacts with PEX5. Interacts with TYSND1. May interact with enzymes involved in beta-oxidation of fatty acids, including ACOX1/AOX.

The protein localises to the peroxisome matrix. The catalysed reaction is Hydrolysis of proteins in presence of ATP.. ATP-dependent serine protease that mediates the selective degradation of misfolded and unassembled polypeptides in the peroxisomal matrix. Necessary for type 2 peroxisome targeting signal (PTS2)-containing protein processing and facilitates peroxisome matrix protein import. May indirectly regulate peroxisomal fatty acid beta-oxidation through degradation of the self-processed forms of TYSND1. This is Lon protease homolog 2, peroxisomal from Bos taurus (Bovine).